A 314-amino-acid chain; its full sequence is Serine/threonine-protein phosphatase SIT4 (314 aa).

Residues Asp-53, His-55, Asp-85, and Asn-117 each coordinate Mn(2+). The active-site Proton donor is His-118. His-167 and His-241 together coordinate Mn(2+).

It belongs to the PPP phosphatase family. PP-6 (PP-V) subfamily. In terms of assembly, interacts with MDS3. The cofactor is Mn(2+).

The protein localises to the cytoplasm. It carries out the reaction O-phospho-L-seryl-[protein] + H2O = L-seryl-[protein] + phosphate. It catalyses the reaction O-phospho-L-threonyl-[protein] + H2O = L-threonyl-[protein] + phosphate. Its function is as follows. Serine/threonine protein phosphatase which is involved in the dephosphorylation of the large subunit of RNA polymerase II. Is required in late G1 for normal G1 cyclin expression, bud initiation and expression of certain genes that are periodically expressed during late G1. Plays a role during hyphal growth through the regulation of cell wall biogenesis, osmosensing and protein translation. Involved in virulence in a mouse systemic infection model. The chain is Serine/threonine-protein phosphatase SIT4 (SIT4) from Candida albicans (strain SC5314 / ATCC MYA-2876) (Yeast).